We begin with the raw amino-acid sequence, 244 residues long: Carbonic anhydrase (244 aa).

The signal sequence occupies residues 1–19; sequence MKGKLSIALMLSVCFSASA. The Alpha-carbonic anhydrase domain occupies 23-244; it reads VHWGYEGNGD…QPLNGRIIIH (222 aa). Cys-46 and Cys-199 form a disulfide bridge. Catalysis depends on His-84, which acts as the Proton acceptor. His-109, His-111, and His-128 together coordinate Zn(2+). Position 195–196 (195–196) interacts with substrate; it reads TT.

This sequence belongs to the alpha-carbonic anhydrase family. Zn(2+) serves as cofactor.

The protein localises to the periplasm. The enzyme catalyses hydrogencarbonate + H(+) = CO2 + H2O. Its function is as follows. Reversible hydration of carbon dioxide. The polypeptide is Carbonic anhydrase (cah) (Pectobacterium carotovorum (Erwinia carotovora)).